A 246-amino-acid polypeptide reads, in one-letter code: Triosephosphate isomerase (246 aa).

Substrate is bound at residue 9–11 (NWK). The active-site Electrophile is the His99. The active-site Proton acceptor is the Glu168. Substrate-binding positions include Gly174, Ser207, and 228–229 (GG).

It belongs to the triosephosphate isomerase family. Homodimer.

The protein localises to the cytoplasm. It catalyses the reaction D-glyceraldehyde 3-phosphate = dihydroxyacetone phosphate. It functions in the pathway carbohydrate biosynthesis; gluconeogenesis. The protein operates within carbohydrate degradation; glycolysis; D-glyceraldehyde 3-phosphate from glycerone phosphate: step 1/1. Involved in the gluconeogenesis. Catalyzes stereospecifically the conversion of dihydroxyacetone phosphate (DHAP) to D-glyceraldehyde-3-phosphate (G3P). This is Triosephosphate isomerase from Prochlorococcus marinus (strain NATL2A).